The chain runs to 2190 residues: Highly-reducing polyketide synthase 1 (2190 aa).

Residues 6–431 (LTPVAIVGYA…GANAHVVLGA (426 aa)) form the Ketosynthase family 3 (KS3) domain. Active-site for beta-ketoacyl synthase activity residues include Cys179, His315, and His355. Positions 541-857 (FVFTGQGAQW…VSVLARGQNA (317 aa)) constitute a Malonyl-CoA:ACP transacylase (MAT) domain. The N-terminal hotdog fold stretch occupies residues 925-1061 (NDLLGSLADW…GLVGVRNSPA (137 aa)). Residues 925–1246 (NDLLGSLADW…MTPLRESSGS (322 aa)) enclose the PKS/mFAS DH domain. His957 functions as the Proton acceptor; for dehydratase activity in the catalytic mechanism. Positions 1089–1246 (TETVDVQAMY…MTPLRESSGS (158 aa)) are C-terminal hotdog fold. Catalysis depends on Asp1154, which acts as the Proton donor; for dehydratase activity. Residues 1494 to 1804 (GSLDSFYFVD…SGKSMGKLVI (311 aa)) form the Enoyl reductase (ER) domain. The Ketoreductase (KR) domain maps to 1828-2005 (ASYLIVGGTG…GTSLDLTAVS (178 aa)). Residues 2107–2184 (KALEVLYGAL…ELAKLISKKS (78 aa)) enclose the Carrier domain. O-(pantetheine 4'-phosphoryl)serine is present on Ser2144.

It depends on pantetheine 4'-phosphate as a cofactor.

In terms of biological role, highly-reducing polyketide synthase; part of the gene cluster that mediates the biosynthesis of liamocins, glycolipids (also called heavy oils) composed of a single mannitol or arabitol headgroup linked to either three, four or even six 3,5-dihydroxydecanoic ester tail-groups. Within the pathway, PKS1 is responsible for biosynthesis of 3,5-dihydroxydecanoic acid from acetyl-CoA and malonyl-CoA. A phosphopantetheine transferase (PPTase) activates the HR-PKS. The esterase EST1 then catalyzes ester bond formation between 3,5-dihydroxydecanoic acid and mannitol (provided by the mannitol-1-phosphate 5-dehydrogenase and the NADP-dependent mannitol dehydrogenase) or arabinol (provided by the L-arabinitol 4-dehydrogenase). This chain is Highly-reducing polyketide synthase 1, found in Aureobasidium melanogenum (Aureobasidium pullulans var. melanogenum).